A 947-amino-acid chain; its full sequence is Protocadherin alpha-4 (947 aa).

An N-terminal signal peptide occupies residues Met-1–Gly-29. 6 consecutive Cadherin domains span residues Gln-30 to Phe-133, Pro-134 to Phe-242, Asp-243 to Leu-350, Glu-351 to Phe-455, Ala-456 to Leu-565, and Asp-588 to Ala-678. Residues Gln-30–Asn-697 are Extracellular-facing. The cysteines at positions 96 and 102 are disulfide-linked. N-linked (GlcNAc...) asparagine glycosylation is found at Asn-139, Asn-257, and Asn-265. An N-linked (GlcNAc...) asparagine glycan is attached at Asn-548. Residues Val-698 to Tyr-718 traverse the membrane as a helical segment. Over Thr-719 to Gln-947 the chain is Cytoplasmic. PXXP repeat units lie at residues Pro-734–Pro-737, Pro-774–Pro-777, Pro-796–Pro-799, Pro-829–Pro-832, Pro-870–Pro-873, and Pro-888–Pro-891. The interval Pro-734–Pro-891 is 6 X 4 AA repeats of P-X-X-P. Residues Thr-738 to Gln-947 form a required for interaction with FYN region. Disordered regions lie at residues Arg-754 to Tyr-805 and Gly-828 to Pro-853. The segment at Ala-892–Gln-947 is disordered. The segment covering Asp-906–Lys-920 has biased composition (basic and acidic residues).

In terms of assembly, forms homodimers in trans (molecules expressed by two different cells). Forms promiscuous heterodimers in cis (at the plasma membrane of the same cell) with other protocadherins. Interacts with FYN.

The protein localises to the cell membrane. Its function is as follows. Calcium-dependent cell-adhesion protein involved in cells self-recognition and non-self discrimination. Thereby, it is involved in the establishment and maintenance of specific neuronal connections in the brain. The sequence is that of Protocadherin alpha-4 from Pan troglodytes (Chimpanzee).